Consider the following 253-residue polypeptide: MSFMVHNRKGSKKQFQVDPLLLPKVPRTNYLHLQEEKHRLQLKKFLLHRMFLVGYIQGNTEKKDISEYYEQLFQSILKHHLGESVTGLMLIYPSTFLHILESSNGTLFRILLDYVAHEKSETEFMLQNMKIVVASHNIPTRLFMQWHISAIKVPVLYLDDESQSPSIEEVTTEFLTMTHKLALQLYKTVKLGAKGPGDNLHQLAPELILPEQIIKYLCKAEEFMDPASFLSMYNRPIHVTLDSDIVWPAPSRF.

The sequence is that of Testis-expressed protein 47 (Tex47) from Mus musculus (Mouse).